The following is a 96-amino-acid chain: Aspartyl/glutamyl-tRNA(Asn/Gln) amidotransferase subunit C (96 aa).

The protein belongs to the GatC family. In terms of assembly, heterotrimer of A, B and C subunits.

The enzyme catalyses L-glutamyl-tRNA(Gln) + L-glutamine + ATP + H2O = L-glutaminyl-tRNA(Gln) + L-glutamate + ADP + phosphate + H(+). It carries out the reaction L-aspartyl-tRNA(Asn) + L-glutamine + ATP + H2O = L-asparaginyl-tRNA(Asn) + L-glutamate + ADP + phosphate + 2 H(+). Allows the formation of correctly charged Asn-tRNA(Asn) or Gln-tRNA(Gln) through the transamidation of misacylated Asp-tRNA(Asn) or Glu-tRNA(Gln) in organisms which lack either or both of asparaginyl-tRNA or glutaminyl-tRNA synthetases. The reaction takes place in the presence of glutamine and ATP through an activated phospho-Asp-tRNA(Asn) or phospho-Glu-tRNA(Gln). This is Aspartyl/glutamyl-tRNA(Asn/Gln) amidotransferase subunit C from Bacillus velezensis (strain DSM 23117 / BGSC 10A6 / LMG 26770 / FZB42) (Bacillus amyloliquefaciens subsp. plantarum).